Here is a 195-residue protein sequence, read N- to C-terminus: Holliday junction branch migration complex subunit RuvA (195 aa).

Positions 1 to 63 (MIASVRGEVL…EDSQTLYGFA (63 aa)) are domain I. Residues 64-138 (DSDARDLFLT…DKVGSSTSSG (75 aa)) form a domain II region. The interval 138 to 142 (GVAAA) is flexible linker. The tract at residues 143–195 (GGHGIRGPVVEALVGLGFAVKQAEEATDKVLANDPEATTSSALRAALSMLGKK) is domain III.

It belongs to the RuvA family. As to quaternary structure, homotetramer. Forms an RuvA(8)-RuvB(12)-Holliday junction (HJ) complex. HJ DNA is sandwiched between 2 RuvA tetramers; dsDNA enters through RuvA and exits via RuvB. An RuvB hexamer assembles on each DNA strand where it exits the tetramer. Each RuvB hexamer is contacted by two RuvA subunits (via domain III) on 2 adjacent RuvB subunits; this complex drives branch migration. In the full resolvosome a probable DNA-RuvA(4)-RuvB(12)-RuvC(2) complex forms which resolves the HJ.

The protein resides in the cytoplasm. Functionally, the RuvA-RuvB-RuvC complex processes Holliday junction (HJ) DNA during genetic recombination and DNA repair, while the RuvA-RuvB complex plays an important role in the rescue of blocked DNA replication forks via replication fork reversal (RFR). RuvA specifically binds to HJ cruciform DNA, conferring on it an open structure. The RuvB hexamer acts as an ATP-dependent pump, pulling dsDNA into and through the RuvAB complex. HJ branch migration allows RuvC to scan DNA until it finds its consensus sequence, where it cleaves and resolves the cruciform DNA. This is Holliday junction branch migration complex subunit RuvA from Mycolicibacterium gilvum (strain PYR-GCK) (Mycobacterium gilvum (strain PYR-GCK)).